We begin with the raw amino-acid sequence, 207 residues long: Homeobox protein BarH-like 1 (207 aa).

The homeobox DNA-binding region spans Gly-95 to Val-154. Positions Gly-157–Glu-207 are disordered. Positions Glu-183–Glu-207 are enriched in basic and acidic residues.

This sequence belongs to the BAR homeobox family. In terms of tissue distribution, expressed predominantly in the facial primordia, developing stomach, and proximal limbs.

It localises to the nucleus. Transcription factor, which is involved in craniofacial development, in odontogenic region definition, and in stomach organogenesis. Binds to a regulatory module of the NCAM promoter. This chain is Homeobox protein BarH-like 1 (BARX1), found in Gallus gallus (Chicken).